Here is a 373-residue protein sequence, read N- to C-terminus: Probable tRNA sulfurtransferase (373 aa).

One can recognise a THUMP domain in the interval 54–158; sequence NKNIEELSKV…NDVAYFYHKI (105 aa). ATP contacts are provided by residues 176–177, 201–202, K256, G278, and Q287; these read LF and NF.

This sequence belongs to the ThiI family.

It localises to the cytoplasm. It catalyses the reaction [ThiI sulfur-carrier protein]-S-sulfanyl-L-cysteine + a uridine in tRNA + 2 reduced [2Fe-2S]-[ferredoxin] + ATP + H(+) = [ThiI sulfur-carrier protein]-L-cysteine + a 4-thiouridine in tRNA + 2 oxidized [2Fe-2S]-[ferredoxin] + AMP + diphosphate. The catalysed reaction is [ThiS sulfur-carrier protein]-C-terminal Gly-Gly-AMP + S-sulfanyl-L-cysteinyl-[cysteine desulfurase] + AH2 = [ThiS sulfur-carrier protein]-C-terminal-Gly-aminoethanethioate + L-cysteinyl-[cysteine desulfurase] + A + AMP + 2 H(+). Its pathway is cofactor biosynthesis; thiamine diphosphate biosynthesis. Catalyzes the ATP-dependent transfer of a sulfur to tRNA to produce 4-thiouridine in position 8 of tRNAs, which functions as a near-UV photosensor. Also catalyzes the transfer of sulfur to the sulfur carrier protein ThiS, forming ThiS-thiocarboxylate. This is a step in the synthesis of thiazole, in the thiamine biosynthesis pathway. The sulfur is donated as persulfide by IscS. This Saccharolobus islandicus (strain M.16.4 / Kamchatka #3) (Sulfolobus islandicus) protein is Probable tRNA sulfurtransferase.